We begin with the raw amino-acid sequence, 366 residues long: Phospho-N-acetylmuramoyl-pentapeptide-transferase (366 aa).

Transmembrane regions (helical) follow at residues 27–47, 71–91, 93–113, 134–154, 174–194, 205–225, 245–265, 268–288, 294–314, and 343–363; these read AAMFTAALIVFLFGPKIIASL, TPTMGGLMILAGIVGSSLLWA, LSNVYVVATLLVTLGFGAIGF, LAIEFLIAGIAVFFMMEAAKI, ALLNVGYFFIVFGGFVIVSAG, GLAIVPVMIASAAFGLIAYLA, LAVILGSVIGAGLGFLWFNAP, AIFMGDTGSLALGGLIGTVAV, IVMVIIGGLFVMETLSVIIQV, and QVVIRFWIIAVGLAMLGLATL.

Belongs to the glycosyltransferase 4 family. MraY subfamily. The cofactor is Mg(2+).

The protein localises to the cell inner membrane. The catalysed reaction is UDP-N-acetyl-alpha-D-muramoyl-L-alanyl-gamma-D-glutamyl-meso-2,6-diaminopimeloyl-D-alanyl-D-alanine + di-trans,octa-cis-undecaprenyl phosphate = di-trans,octa-cis-undecaprenyl diphospho-N-acetyl-alpha-D-muramoyl-L-alanyl-D-glutamyl-meso-2,6-diaminopimeloyl-D-alanyl-D-alanine + UMP. It functions in the pathway cell wall biogenesis; peptidoglycan biosynthesis. Functionally, catalyzes the initial step of the lipid cycle reactions in the biosynthesis of the cell wall peptidoglycan: transfers peptidoglycan precursor phospho-MurNAc-pentapeptide from UDP-MurNAc-pentapeptide onto the lipid carrier undecaprenyl phosphate, yielding undecaprenyl-pyrophosphoryl-MurNAc-pentapeptide, known as lipid I. The chain is Phospho-N-acetylmuramoyl-pentapeptide-transferase from Allorhizobium ampelinum (strain ATCC BAA-846 / DSM 112012 / S4) (Agrobacterium vitis (strain S4)).